Here is a 372-residue protein sequence, read N- to C-terminus: Meiotic drive suppressor wtf18 (372 aa).

Helical transmembrane passes span 86 to 106 (FLLRLLISVLAVSVVFFTAWV), 120 to 140 (AFSVTIGITCPILFIATFCFF), 153 to 173 (VTVIFLAQCVKVTVIFLAQCV), 197 to 217 (DLVVTIWLAWVVICFILFGCV), 233 to 253 (CSISAALFFILLLVCIPIWTL), and 257 to 277 (LFGLFQVLGVQSCVVIVTKGL).

This sequence belongs to the WTF family. As to quaternary structure, homomer. Interacts with other proteins that exhibit high sequence similarity.

It is found in the spore membrane. Its subcellular location is the vacuole membrane. Functionally, acts as a suppressor component of the dual wtf meiotic drive system, and can suppress but not confer meiotic drive by compatible poisons. Wtf meiotic drive systems promote unequal transmission of alleles from the parental zygote to progeny spores by encoding a poison and an antidote from the same locus; the poison is trans-acting and forms toxic aggregates in all spores within an ascus, wherease the antidote is spore-specific and targets aggregates for degradation by the vacuole. Meiotic drive by wtf systems therefore lead to poisoning of all progeny that do not inherit the dual poison/antidote allele, or express a compatible antidote. The chain is Meiotic drive suppressor wtf18 from Schizosaccharomyces pombe (strain 972 / ATCC 24843) (Fission yeast).